We begin with the raw amino-acid sequence, 489 residues long: MLKTQEIYSSEDEDDMCCPLCMEEIDISDKNFKPCQCGYRVCRFCWHHIKEDLNGRCPACRRLYTEENVQWRPVTAEEWKMDLHRKNERKKREKERKEVELSNRKHLANIRVVQKNLAYVNGLSPKVANEENINVLKGPEYFGQYGKIIKIAINKKAAANSANGHVGVYITYQRKEDAARAIAAIDGSVSDGRHLRASYGTTKYCTSYLRNQQCPNPSCMYLHEPGDEVDSYTKEDLASLQHTRPLSTKPNVVNGATHSPSPSLPFKTPLLPVTKTPLEEANSSPAAQNQHITTVDHVHPQVSMTPSLSTNNTATSVPAPYSSAASVNVVPGHATTILHHEESSALPPTAAWAKLSPSVLQERLRAAVNQQPLDALKSSSTQTSIPKIQKLKAAKLPSEEENTTKWLNKAINDLVSSLSKINFSTEGTEFDKKQIEMIQNLPPLFVFNARSVIDKEVVPEQEKSAENQPPTSLGINNGNPVMPPPGFQS.

Residues 18–61 (CPLCMEEIDISDKNFKPCQCGYRVCRFCWHHIKEDLNGRCPACR) form an RING-type zinc finger. Residues 76–109 (AEEWKMDLHRKNERKKREKERKEVELSNRKHLAN) are a coiled coil. In terms of domain architecture, RRM spans 116–198 (NLAYVNGLSP…VSDGRHLRAS (83 aa)). A C3H1-type zinc finger spans residues 199–226 (YGTTKYCTSYLRNQQCPNPSCMYLHEPG). 2 stretches are compositionally biased toward polar residues: residues 246–261 (LSTK…HSPS) and 466–479 (ENQP…NNGN). Disordered stretches follow at residues 246–268 (LSTK…PFKT) and 458–489 (VPEQ…GFQS).

The protein localises to the nucleus. Functionally, may negatively regulate the basal and activated transcription of many genes. The protein is Putative general negative regulator of transcription C16C9.04c of Schizosaccharomyces pombe (strain 972 / ATCC 24843) (Fission yeast).